The chain runs to 127 residues: Aspartate 1-decarboxylase (127 aa).

Ser25 (schiff-base intermediate with substrate; via pyruvic acid) is an active-site residue. Ser25 bears the Pyruvic acid (Ser) mark. Thr57 provides a ligand contact to substrate. The Proton donor role is filled by Tyr58. 73 to 75 (GAA) contacts substrate.

This sequence belongs to the PanD family. In terms of assembly, heterooctamer of four alpha and four beta subunits. The cofactor is pyruvate. Post-translationally, is synthesized initially as an inactive proenzyme, which is activated by self-cleavage at a specific serine bond to produce a beta-subunit with a hydroxyl group at its C-terminus and an alpha-subunit with a pyruvoyl group at its N-terminus.

It is found in the cytoplasm. It catalyses the reaction L-aspartate + H(+) = beta-alanine + CO2. The protein operates within cofactor biosynthesis; (R)-pantothenate biosynthesis; beta-alanine from L-aspartate: step 1/1. Functionally, catalyzes the pyruvoyl-dependent decarboxylation of aspartate to produce beta-alanine. This Vesicomyosocius okutanii subsp. Calyptogena okutanii (strain HA) protein is Aspartate 1-decarboxylase.